Consider the following 215-residue polypeptide: Ras-related protein SEC4 (215 aa).

27–34 (GDSGVGKS) is a binding site for GTP. An Effector region motif is present at residues 49–57 (FITTIGIDF). Residues 75–79 (DTAGQ) and 133–136 (NKSD) contribute to the GTP site. 2 positions are modified to phosphoserine: S201 and S204. 2 S-geranylgeranyl cysteine lipidation sites follow: C214 and C215.

Belongs to the small GTPase superfamily. Rab family. In terms of assembly, interacts with the guanyl-nucleotide exchange factor SEC2. Interacts with SRO7, YIF1, YIP3, YIP4 and YIP5.

It localises to the cytoplasmic vesicle. It is found in the secretory vesicle membrane. The protein resides in the cell membrane. The protein localises to the cytoplasm. In terms of biological role, involved in exocytosis. Maybe by regulating the binding and fusion of secretory vesicles with the cell surface. The GTP-bound form of SEC4 may interact with an effector, thereby stimulating its activity and leading to exocytotic fusion. SEC4 may be an upstream activator of the 19.5S SEC8/SEC15 particle. SEC4 probably interacts directly with SEC8; it could serve as the attachment site for the SEC8/SEC15 particle. This is Ras-related protein SEC4 (SEC4) from Saccharomyces cerevisiae (strain ATCC 204508 / S288c) (Baker's yeast).